A 370-amino-acid chain; its full sequence is Putative F-box protein At1g47390 (370 aa).

Positions 1 to 47 (MAPEEKLPCELIEEILSRVPPESLVRFRTVSKKWNALFDDKMFINNH) constitute an F-box domain.

The sequence is that of Putative F-box protein At1g47390 from Arabidopsis thaliana (Mouse-ear cress).